We begin with the raw amino-acid sequence, 246 residues long: Probable transcriptional regulatory protein KPK_1906 (246 aa).

The protein belongs to the TACO1 family.

The protein localises to the cytoplasm. This chain is Probable transcriptional regulatory protein KPK_1906, found in Klebsiella pneumoniae (strain 342).